The sequence spans 200 residues: Protein GrpE (200 aa).

2 stretches are compositionally biased toward acidic residues: residues 1–17 (MNEQPNEELQSEDEQFD) and 34–44 (AFAEAGEETRD). The tract at residues 1-49 (MNEQPNEELQSEDEQFDPQETVSFEGETAANDEAFAEAGEETRDEEMTR) is disordered.

The protein belongs to the GrpE family. In terms of assembly, homodimer.

It is found in the cytoplasm. Its function is as follows. Participates actively in the response to hyperosmotic and heat shock by preventing the aggregation of stress-denatured proteins, in association with DnaK and GrpE. It is the nucleotide exchange factor for DnaK and may function as a thermosensor. Unfolded proteins bind initially to DnaJ; upon interaction with the DnaJ-bound protein, DnaK hydrolyzes its bound ATP, resulting in the formation of a stable complex. GrpE releases ADP from DnaK; ATP binding to DnaK triggers the release of the substrate protein, thus completing the reaction cycle. Several rounds of ATP-dependent interactions between DnaJ, DnaK and GrpE are required for fully efficient folding. This chain is Protein GrpE, found in Rhodopirellula baltica (strain DSM 10527 / NCIMB 13988 / SH1).